We begin with the raw amino-acid sequence, 278 residues long: MANYTAADVKKLRELTGAGMMDCKKALDEADGNVDKAVEALRIKGQKGVAKREGRSAENGAVVSLISEDQTSGVLLELKCETDFVAKGDKFQAVANTLAAHVAATSPADIEALLASEIEAGKTVQAYVDEANANLGEKIVLDRFAQFTGAYVGVYMHRTMPDLPPQIGVLVELDKADAELAKGIAQHIAAFAPKYLSREDVPAEVVEAERRVAEETTRAEGKPEAALPKIVEGRVNGFFKEATLLGQPYALDAKKSVQKVLDEAGVTLKRFSRIKVGI.

An involved in Mg(2+) ion dislocation from EF-Tu region spans residues 82–85 (TDFV).

This sequence belongs to the EF-Ts family.

Its subcellular location is the cytoplasm. Its function is as follows. Associates with the EF-Tu.GDP complex and induces the exchange of GDP to GTP. It remains bound to the aminoacyl-tRNA.EF-Tu.GTP complex up to the GTP hydrolysis stage on the ribosome. The protein is Elongation factor Ts of Streptomyces griseus subsp. griseus (strain JCM 4626 / CBS 651.72 / NBRC 13350 / KCC S-0626 / ISP 5235).